We begin with the raw amino-acid sequence, 172 residues long: Early nodulin-like protein 17 (172 aa).

An N-terminal signal peptide occupies residues 1–26; that stretch reads MARFTVLITAVVLAFLMAAPMPGVTA. One can recognise a Phytocyanin domain in the interval 27–127; that stretch reads KKYTVGENKF…GMKLSVKVEK (101 aa). Asn42, Asn73, Asn88, and Asn101 each carry an N-linked (GlcNAc...) asparagine glycan. Cys80 and Cys115 form a disulfide bridge. Gly141 carries the GPI-anchor amidated glycine lipid modification. The propeptide at 142 to 172 is removed in mature form; it reads SVSMVTGLAQFMIPVSLFAFPAMWDVISRMW.

The protein belongs to the early nodulin-like (ENODL) family.

It is found in the cell membrane. Its function is as follows. May act as a carbohydrate transporter. In Arabidopsis thaliana (Mouse-ear cress), this protein is Early nodulin-like protein 17.